The primary structure comprises 268 residues: UPF0354 protein OB2234 (268 aa).

It belongs to the UPF0354 family.

In Oceanobacillus iheyensis (strain DSM 14371 / CIP 107618 / JCM 11309 / KCTC 3954 / HTE831), this protein is UPF0354 protein OB2234.